We begin with the raw amino-acid sequence, 139 residues long: GSK3-beta interaction protein (139 aa).

The disordered stretch occupies residues 1–22 (METDCNPMELSSMSGFEEGSEL). A required for PRKAR2A interaction; contributes to a protective effect against H(2)O(2)-induced apoptosis region spans residues 41–45 (VNDVL). Residues 115–139 (SPAYREAFGNALLQRLEALKRDGQS) form an interaction with GSK3B and acts as a GSK3B inhibitor region.

This sequence belongs to the GSKIP family. In terms of assembly, forms a complex composed of PRKAR2A or PRKAR2B, GSK3B and GSKIP through GSKIP interaction; facilitates PKA-induced phosphorylation of GSK3B leading to GSK3B inactivation; recruits DNM1L through GSK3B for PKA-mediated phosphorylation of DNM1L; promotes beta-catenin degradation through GSK3B-induced phosphorylation of beta-catenin; stabilizes beta-catenin and enhances Wnt-induced signaling through PKA-induced phosphorylation of beta-catenin. Interacts with GSK3B; induces GSK3B-mediated phosphorylation of GSKIP and inhibits GSK3B kinase activity. In terms of processing, phosphorylated by GSK3B.

Its subcellular location is the cytoplasm. It is found in the nucleus. Its function is as follows. A-kinase anchoring protein for GSK3B and PKA that regulates or facilitates their kinase activity towards their targets. The ternary complex enhances Wnt-induced signaling by facilitating the GSK3B- and PKA-induced phosphorylation of beta-catenin leading to beta-catenin degradation and stabilization respectively. Upon cAMP activation, the ternary complex contributes to neuroprotection against oxidative stress-induced apoptosis by facilitating the PKA-induced phosphorylation of DML1 and PKA-induced inactivation of GSK3B. During neurite outgrowth promotes neuron proliferation; while increases beta-catenin-induced transcriptional activity through GSK3B kinase activity inhibition, reduces N-cadherin level to promote cell cycle progression. May play a role in cleft palate formation and is required for postnatal life through modulation of the activity of GSK3B during development. This chain is GSK3-beta interaction protein, found in Macaca fascicularis (Crab-eating macaque).